The primary structure comprises 530 residues: T-complex protein 1 subunit gamma (530 aa).

This sequence belongs to the TCP-1 chaperonin family. As to quaternary structure, heterooligomeric complex of about 850 to 900 kDa that forms two stacked rings, 12 to 16 nm in diameter.

Its subcellular location is the cytoplasm. Functionally, molecular chaperone; assists the folding of proteins upon ATP hydrolysis. Known to play a role, in vitro, in the folding of actin and tubulin. The chain is T-complex protein 1 subunit gamma (cct3) from Dictyostelium discoideum (Social amoeba).